The chain runs to 222 residues: RNA-binding protein KhpB (222 aa).

Residues Asp-2–Ile-51 are jag_N domain. The KH domain occupies Lys-54–Lys-133. An R3H domain is found at Asn-138–Ser-204.

This sequence belongs to the KhpB RNA-binding protein family. As to quaternary structure, forms a complex with KhpA. Homodimer or homotrimer.

Its subcellular location is the cytoplasm. Its function is as follows. A probable RNA chaperone. Forms a complex with KhpA which binds to cellular RNA and controls its expression. Plays a role in peptidoglycan (PG) homeostasis and cell length regulation. This is RNA-binding protein KhpB from Clostridium symbiosum (Bacteroides symbiosus).